A 370-amino-acid polypeptide reads, in one-letter code: Aminomethyltransferase (370 aa).

The protein belongs to the GcvT family. The glycine cleavage system is composed of four proteins: P, T, L and H.

It carries out the reaction N(6)-[(R)-S(8)-aminomethyldihydrolipoyl]-L-lysyl-[protein] + (6S)-5,6,7,8-tetrahydrofolate = N(6)-[(R)-dihydrolipoyl]-L-lysyl-[protein] + (6R)-5,10-methylene-5,6,7,8-tetrahydrofolate + NH4(+). The glycine cleavage system catalyzes the degradation of glycine. This is Aminomethyltransferase from Clostridium botulinum (strain Okra / Type B1).